Reading from the N-terminus, the 86-residue chain is Small ribosomal subunit protein bS20 (86 aa).

The interval 1 to 25 (MANIKSQMKRIRTNEAARKRNQSVK) is disordered.

This sequence belongs to the bacterial ribosomal protein bS20 family.

Binds directly to 16S ribosomal RNA. In Nocardia farcinica (strain IFM 10152), this protein is Small ribosomal subunit protein bS20.